The primary structure comprises 483 residues: Glutamyl-tRNA(Gln) amidotransferase subunit A (483 aa).

Active-site charge relay system residues include Lys77 and Ser152. Ser176 functions as the Acyl-ester intermediate in the catalytic mechanism.

The protein belongs to the amidase family. GatA subfamily. Heterotrimer of A, B and C subunits.

It carries out the reaction L-glutamyl-tRNA(Gln) + L-glutamine + ATP + H2O = L-glutaminyl-tRNA(Gln) + L-glutamate + ADP + phosphate + H(+). In terms of biological role, allows the formation of correctly charged Gln-tRNA(Gln) through the transamidation of misacylated Glu-tRNA(Gln) in organisms which lack glutaminyl-tRNA synthetase. The reaction takes place in the presence of glutamine and ATP through an activated gamma-phospho-Glu-tRNA(Gln). The chain is Glutamyl-tRNA(Gln) amidotransferase subunit A from Listeria monocytogenes serotype 4b (strain F2365).